The chain runs to 236 residues: MFDSLVDFLKTNIDELNGHELQISNEFKEHHNKDSKYIIKNWLFSSPEYRKWRITRLDGGKNIQVFNTVAYPNFDSELPILGADILWFGTAKKLLAILDYQPLIQENKYLEKYCSSLGMIKKKYSAFDNNKMKNIYDSKKYFSPWVIICRGNKLNLDRDLNDVFHAFINNYLNLNKSNPVNQFLNLEEIKINQIKYDKYSFEKDPADKLFKSFFGEKWTKKFINKFLFTLNNEIIL.

Belongs to the HY2 family.

It carries out the reaction 15,16-dihydrobiliverdin + oxidized 2[4Fe-4S]-[ferredoxin] = biliverdin IXalpha + reduced 2[4Fe-4S]-[ferredoxin] + 2 H(+). Catalyzes the two-electron reduction of biliverdin IX-alpha at the C15 methine bridge. The chain is 15,16-dihydrobiliverdin:ferredoxin oxidoreductase from Prochlorococcus marinus (strain MIT 9312).